Here is a 290-residue protein sequence, read N- to C-terminus: HTH-type transcriptional activator RhaR (290 aa).

An HTH araC/xylS-type domain is found at 179–277; the sequence is DLIMSALQQS…GMTPRDYRQR (99 aa). 2 DNA-binding regions (H-T-H motif) span residues 196-217 and 244-267; these read ADFCHKNQLVERSLKQLFRQQT and ISDIAARCGFEDSNYFSAVFTREA.

Binds DNA as a dimer.

It is found in the cytoplasm. Its function is as follows. Activates expression of the rhaSR operon in response to L-rhamnose. This is HTH-type transcriptional activator RhaR from Yersinia pseudotuberculosis serotype O:1b (strain IP 31758).